The primary structure comprises 370 residues: 3-isopropylmalate dehydrogenase (370 aa).

NAD(+) is bound at residue 77–90; the sequence is GPKWDGVPYEHRPE. The substrate site is built by arginine 97, arginine 107, arginine 135, and aspartate 226. The Mg(2+) site is built by aspartate 226, aspartate 250, and aspartate 254. Residue 290–302 coordinates NAD(+); sequence GSAPDIAGKSIAN.

The protein belongs to the isocitrate and isopropylmalate dehydrogenases family. LeuB type 1 subfamily. As to quaternary structure, homodimer. Requires Mg(2+) as cofactor. Mn(2+) serves as cofactor.

The protein resides in the cytoplasm. It carries out the reaction (2R,3S)-3-isopropylmalate + NAD(+) = 4-methyl-2-oxopentanoate + CO2 + NADH. Its pathway is amino-acid biosynthesis; L-leucine biosynthesis; L-leucine from 3-methyl-2-oxobutanoate: step 3/4. In terms of biological role, catalyzes the oxidation of 3-carboxy-2-hydroxy-4-methylpentanoate (3-isopropylmalate) to 3-carboxy-4-methyl-2-oxopentanoate. The product decarboxylates to 4-methyl-2 oxopentanoate. The protein is 3-isopropylmalate dehydrogenase (leuB) of Agrobacterium fabrum (strain C58 / ATCC 33970) (Agrobacterium tumefaciens (strain C58)).